Here is an 89-residue protein sequence, read N- to C-terminus: Small ribosomal subunit protein uS14A (89 aa).

This sequence belongs to the universal ribosomal protein uS14 family. As to quaternary structure, part of the 30S ribosomal subunit. Contacts proteins S3 and S10.

In terms of biological role, binds 16S rRNA, required for the assembly of 30S particles and may also be responsible for determining the conformation of the 16S rRNA at the A site. This chain is Small ribosomal subunit protein uS14A, found in Bacillus pumilus (strain SAFR-032).